The primary structure comprises 185 residues: Ribosome-recycling factor (185 aa).

The protein belongs to the RRF family.

It is found in the cytoplasm. In terms of biological role, responsible for the release of ribosomes from messenger RNA at the termination of protein biosynthesis. May increase the efficiency of translation by recycling ribosomes from one round of translation to another. In Azotobacter vinelandii (strain DJ / ATCC BAA-1303), this protein is Ribosome-recycling factor.